Consider the following 507-residue polypeptide: Cytochrome c-type protein ImcH (507 aa).

Transmembrane regions (helical) follow at residues isoleucine 14–alanine 34, tyrosine 45–valine 65, and leucine 100–isoleucine 120. Heme contacts are provided by cysteine 132, cysteine 136, methionine 140, histidine 152, cysteine 157, cysteine 160, histidine 161, aspartate 400, cysteine 449, cysteine 452, histidine 453, cysteine 487, cysteine 490, histidine 491, and glutamate 496.

It belongs to the NapC/NirT/NrfH family. Binds 4 heme c groups covalently per subunit.

It is found in the cell inner membrane. Functionally, redox protein involved in a high-potential metal respiratory pathway. Is required only for electron transfer to terminal extracellular electron acceptors with redox potentials higher than -0.1 V. ImcH likely transfers electrons from the quinone pool to a periplasmic acceptor. The chain is Cytochrome c-type protein ImcH from Geobacter sulfurreducens (strain ATCC 51573 / DSM 12127 / PCA).